The primary structure comprises 698 residues: Sulfhydryl oxidase 2 (698 aa).

The N-terminal stretch at 1 to 21 (MAAAGAAVARSPGIGAGPALR) is a signal peptide. The region spanning 34-178 (PRLLVLLAAA…RQTMIDFLQN (145 aa)) is the Thioredoxin domain. Asn77 carries N-linked (GlcNAc...) asparagine glycosylation. Catalysis depends on nucleophile residues Cys91 and Cys94. 2 disulfide bridges follow: Cys91/Cys94 and Cys122/Cys131. Residues Asn178, Asn218, and Asn266 are each glycosylated (N-linked (GlcNAc...) asparagine). The cysteines at positions 418 and 430 are disulfide-linked. In terms of domain architecture, ERV/ALR sulfhydryl oxidase spans 421 to 530 (SRSELRGYPC…EDPRFPKLQW (110 aa)). FAD-binding positions include Arg426, Trp433, His437, Glu478, His482, 505 to 512 (WKKHNMVN), Lys527, and Trp530. Residues Cys476 and Cys479 are joined by a disulfide bond. Residues Cys536 and Cys539 are joined by a disulfide bond. Residues 570 to 624 (TYSADQGDSSEGGTLARGEEEEKRLTPPEVSHGDRDTQSVRPPGALGPRPALPES) are disordered. The segment covering 572–581 (SADQGDSSEG) has biased composition (polar residues). Phosphoserine is present on Ser579. The span at 586–607 (RGEEEEKRLTPPEVSHGDRDTQ) shows a compositional bias: basic and acidic residues. A compositionally biased stretch (low complexity) spans 610–622 (RPPGALGPRPALP). Residues 662–682 (SLCVVLYVASSLFLMVMYFFF) traverse the membrane as a helical segment.

It belongs to the quiescin-sulfhydryl oxidase (QSOX) family. The cofactor is FAD. Expressed in pancreas, brain, placenta, kidney, heart and fetal tissues. Weakly expressed in lung, liver and skeletal muscles.

The protein localises to the membrane. It is found in the secreted. Its subcellular location is the cell membrane. The protein resides in the nucleus membrane. The enzyme catalyses 2 R'C(R)SH + O2 = R'C(R)S-S(R)CR' + H2O2. Functionally, catalyzes the oxidation of sulfhydryl groups in peptide and protein thiols to disulfides with the reduction of oxygen to hydrogen peroxide. May contribute to disulfide bond formation in a variety of secreted proteins. Also seems to play a role in regulating the sensitization of neuroblastoma cells for interferon-gamma-induced apoptosis. The protein is Sulfhydryl oxidase 2 (QSOX2) of Homo sapiens (Human).